Reading from the N-terminus, the 163-residue chain is Cytochrome b6-f complex subunit 4 (163 aa).

The next 3 membrane-spanning stretches (helical) occupy residues 36–56 (LLYIFPVVILGTIACNGGLAV), 95–115 (LLGVLLMVSVPAGLLTVPFLE), and 131–151 (TVFLVGTLVALWLGIGATLPI).

The protein belongs to the cytochrome b family. PetD subfamily. As to quaternary structure, the 4 large subunits of the cytochrome b6-f complex are cytochrome b6, subunit IV (17 kDa polypeptide, petD), cytochrome f and the Rieske protein, while the 4 small subunits are petG, petL, petM and petN. The complex functions as a dimer.

It localises to the plastid. Its subcellular location is the chloroplast thylakoid membrane. Functionally, component of the cytochrome b6-f complex, which mediates electron transfer between photosystem II (PSII) and photosystem I (PSI), cyclic electron flow around PSI, and state transitions. This chain is Cytochrome b6-f complex subunit 4, found in Pelargonium hortorum (Common geranium).